A 1168-amino-acid polypeptide reads, in one-letter code: Zinc finger CCHC domain-containing protein 2 (1168 aa).

Disordered regions lie at residues 1–87, 209–242, 561–693, and 932–978; these read MLRM…GGHA, EGSRGSVEDEPGGDDEQDAEKDGPGPEGGGCAKL, KRSL…LGTE, and ATSA…SDST. Over residues 43–66 the composition is skewed to pro residues; it reads PPPPPPTGLPRGPPPPPPSPPRGL. Residues 67–78 are compositionally biased toward low complexity; it reads EPPVASGPTAGA. Residues 216–227 are compositionally biased toward acidic residues; the sequence is EDEPGGDDEQDA. The span at 233–242 shows a compositional bias: gly residues; sequence GPEGGGCAKL. The span at 574–588 shows a compositional bias: basic and acidic residues; it reads PQVEKEKIKKTENRL. Residues 626–635 are compositionally biased toward low complexity; it reads SSESYSSPSS. Residues 636 to 655 show a composition bias toward basic and acidic residues; it reads PRHDGRESLESEEEKDRDTD. Positions 932–949 are enriched in polar residues; that stretch reads ATSAQPASTGISPAQSTV. The segment covering 951–965 has biased composition (pro residues); it reads PAVPTHTPGPAPSPS. Over residues 966 to 978 the composition is skewed to polar residues; the sequence is PALTHSTAQSDST. The CCHC-type zinc-finger motif lies at 1121–1138; the sequence is VSCYNCGVSGHYAQDCKQ.

The sequence is that of Zinc finger CCHC domain-containing protein 2 (Zcchc2) from Rattus norvegicus (Rat).